The chain runs to 65 residues: Bacteriocin amylovorin-L (65 aa).

A propeptide spanning residues M1–G15 is cleaved from the precursor. The chain crosses the membrane as a helical span at residues L39 to A59.

As to quaternary structure, active lactobin is composed of two different peptides, one which is lactobin A.

It localises to the secreted. It is found in the host cell membrane. Functionally, this heat stable bacteriocin inhibits the growth of closely related Lactobacillus species. It may act as a pore-forming protein, creating a channel in the cell membrane. It kills Lactobacillus helveticus ATCC 15009, but displays no activity towards Listeria species. In Lactobacillus amylovorus, this protein is Bacteriocin amylovorin-L (amyL).